Consider the following 394-residue polypeptide: MNRIAADVQRAFENAGEKTLPIKVEEIVLGKQAADSLLDYVKRKNNQHIVLVCDANTHRIAGIDLENRLNQEGFQAECLIIPENEAGDVTADERSLIHVLIHTKQPTDVMIAVGSGTIHDIVRFAAFQRDLPFISYPTAPSVDGFTSAGAPIILYGTKTTIQTKAPSALFADLDLLKAAPQSMVAAGFGDMLGKITSLADWEISRHLAGEPYSPAGAKIVQEALAACIEHTEDIAMKTETGIRVLMESLLVSGLVMLALDHSRPASGGEHHISHWIEMELMEKKRPQILHGAKVGCAAVLLTDTYRKLAQDDGLNEFSPSRREAIQSAYQTLPRGEVLADWLRSAGGPAYFDEIGVGQDSVKNAFRHAHTLRDRCTGLRIINENKTLINHGLYE.

NAD(+) contacts are provided by residues Asp-54, 116–120 (GTIHD), and 138–141 (TAPS). A substrate-binding site is contributed by Asp-143. Ser-147 is a binding site for NAD(+). Residue Asp-190 coordinates substrate. Ni(2+)-binding residues include Asp-190 and His-270. A substrate-binding site is contributed by His-274. His-290 lines the Ni(2+) pocket.

Belongs to the glycerol-1-phosphate dehydrogenase family. As to quaternary structure, homodimer. The cofactor is Ni(2+).

The protein resides in the cytoplasm. It carries out the reaction sn-glycerol 1-phosphate + NAD(+) = dihydroxyacetone phosphate + NADH + H(+). The catalysed reaction is sn-glycerol 1-phosphate + NADP(+) = dihydroxyacetone phosphate + NADPH + H(+). In terms of biological role, catalyzes the NAD(P)H-dependent reduction of dihydroxyacetonephosphate (DHAP or glycerone phosphate) to glycerol 1-phosphate (G1P). The G1P thus generated is probably used for the synthesis of phosphoglycerolipids in Gram-positive bacterial species. Prefers NADH over NADPH as coenzyme. Is also able to catalyze the reverse reaction, i.e. the NAD(+)-dependent oxidation of G1P but not of G3P. Does not possess glycerol dehydrogenase activity. The chain is Glycerol-1-phosphate dehydrogenase [NAD(P)+] (egsA) from Bacillus subtilis (strain 168).